The chain runs to 150 residues: Peptide methionine sulfoxide reductase MsrB (150 aa).

The MsrB domain occupies 9-132 (EAELKRTLTK…NSAALKFIPF (124 aa)). Cys-121 functions as the Nucleophile in the catalytic mechanism.

Belongs to the MsrB Met sulfoxide reductase family.

The catalysed reaction is L-methionyl-[protein] + [thioredoxin]-disulfide + H2O = L-methionyl-(R)-S-oxide-[protein] + [thioredoxin]-dithiol. The protein is Peptide methionine sulfoxide reductase MsrB of Mycoplasma genitalium (strain ATCC 33530 / DSM 19775 / NCTC 10195 / G37) (Mycoplasmoides genitalium).